The following is a 384-amino-acid chain: GDSL esterase/lipase At1g28670 (384 aa).

Positions 1–24 (MASSLKKLISSFLLVLYSTTIIVA) are cleaved as a signal peptide. The Nucleophile role is filled by serine 42. Asparagine 105, asparagine 138, and asparagine 321 each carry an N-linked (GlcNAc...) asparagine glycan. Active-site residues include aspartate 346 and histidine 349.

Belongs to the 'GDSL' lipolytic enzyme family.

It localises to the secreted. The protein is GDSL esterase/lipase At1g28670 of Arabidopsis thaliana (Mouse-ear cress).